The chain runs to 396 residues: Enoyl-[acyl-carrier-protein] reductase [NADH] (396 aa).

NAD(+) is bound by residues 47 to 52 (GASTGF), 73 to 74 (FE), 110 to 111 (DA), and 138 to 139 (LA). Position 224 (tyrosine 224) interacts with substrate. The Proton donor role is filled by tyrosine 234. NAD(+)-binding positions include lysine 243 and 272–274 (LVT).

It belongs to the TER reductase family. In terms of assembly, monomer.

The enzyme catalyses a 2,3-saturated acyl-[ACP] + NAD(+) = a (2E)-enoyl-[ACP] + NADH + H(+). Its pathway is lipid metabolism; fatty acid biosynthesis. In terms of biological role, involved in the final reduction of the elongation cycle of fatty acid synthesis (FAS II). Catalyzes the reduction of a carbon-carbon double bond in an enoyl moiety that is covalently linked to an acyl carrier protein (ACP). This is Enoyl-[acyl-carrier-protein] reductase [NADH] from Flavobacterium psychrophilum (strain ATCC 49511 / DSM 21280 / CIP 103535 / JIP02/86).